A 255-amino-acid chain; its full sequence is 5'-nucleotidase SurE (255 aa).

The a divalent metal cation site is built by aspartate 8, aspartate 9, serine 40, and asparagine 93.

The protein belongs to the SurE nucleotidase family. It depends on a divalent metal cation as a cofactor.

It localises to the cytoplasm. It catalyses the reaction a ribonucleoside 5'-phosphate + H2O = a ribonucleoside + phosphate. Its function is as follows. Nucleotidase that shows phosphatase activity on nucleoside 5'-monophosphates. The sequence is that of 5'-nucleotidase SurE from Rhodopseudomonas palustris (strain BisB5).